Consider the following 67-residue polypeptide: MPKMKTKSSAKKRFRVRPGGTVKRGQAFKRHILTKKTTKNKRHLRGAVAVHETNMVSVAAMLPGRGI.

Over residues 1–16 (MPKMKTKSSAKKRFRV) the composition is skewed to basic residues. Positions 1-23 (MPKMKTKSSAKKRFRVRPGGTVK) are disordered.

The protein belongs to the bacterial ribosomal protein bL35 family.

In Variovorax paradoxus (strain S110), this protein is Large ribosomal subunit protein bL35.